The primary structure comprises 338 residues: Heat-inducible transcription repressor HrcA (338 aa).

This sequence belongs to the HrcA family.

Functionally, negative regulator of class I heat shock genes (grpE-dnaK-dnaJ and groELS operons). Prevents heat-shock induction of these operons. This is Heat-inducible transcription repressor HrcA from Thermotoga petrophila (strain ATCC BAA-488 / DSM 13995 / JCM 10881 / RKU-1).